Consider the following 260-residue polypeptide: Vesicle-associated membrane protein 7B (260 aa).

The Cytoplasmic segment spans residues 1 to 189; that stretch reads MPIIYSLVAR…KCAMWWKNVK (189 aa). The 104-residue stretch at 7 to 110 folds into the Longin domain; it reads LVARGSSVLA…GMNSDFSRTL (104 aa). One can recognise a v-SNARE coiled-coil homology domain in the interval 125–186; sequence TMSRTMAEID…KQLKCAMWWK (62 aa). Residues 190–210 traverse the membrane as a helical; Anchor for type IV membrane protein segment; the sequence is LMLVLGAIVLIIIFIIVMSYC. The Vesicular segment spans residues 211-260; it reads DGFRSGSKCRSSPSSNSTPTPTPTETPTPTPTPTSTPTPSQLLETLLNQF. The interval 215–250 is disordered; it reads SGSKCRSSPSSNSTPTPTPTETPTPTPTPTSTPTPS. Residues 230–246 show a composition bias toward pro residues; that stretch reads TPTPTETPTPTPTPTST.

The protein belongs to the synaptobrevin family.

It localises to the cytoplasmic vesicle. It is found in the secretory vesicle membrane. Its subcellular location is the golgi apparatus. The protein localises to the trans-Golgi network membrane. The protein resides in the late endosome membrane. It localises to the lysosome membrane. It is found in the endoplasmic reticulum membrane. Its subcellular location is the phagosome membrane. In terms of biological role, involved in the targeting and/or fusion of transport vesicles to their target membrane during transport of proteins from the early endosome to the lysosome. Required for heterotypic fusion of late endosomes with lysosomes and homotypic lysosomal fusion. The protein is Vesicle-associated membrane protein 7B of Dictyostelium discoideum (Social amoeba).